A 338-amino-acid chain; its full sequence is Transferrin receptor subunit ESAG7 (338 aa).

Residues 1–17 (MRFWFVLLALLGKEIYA) form the signal peptide. 2 N-linked (GlcNAc...) asparagine glycosylation sites follow: Asn26 and Asn110. 4 disulfides stabilise this stretch: Cys34–Cys161, Cys84–Cys311, Cys144–Cys215, and Cys230–Cys247. Asn234 carries an N-linked (GlcNAc...) asparagine glycan.

Heterodimer composed of ESAG6 and ESAG7. In terms of processing, N-glycosylated. Glycosylation is dispensable for heterodimer formation and host transferrin binding.

Its subcellular location is the cell membrane. It is found in the flagellar pocket. Transferrin receptor subunit involved in receptor-mediated acquisition of iron from the environment by binding host TF/transferrin. The protein is Transferrin receptor subunit ESAG7 of Trypanosoma brucei brucei.